Here is a 311-residue protein sequence, read N- to C-terminus: Malate dehydrogenase (311 aa).

NAD(+) is bound by residues glycine 7 to glycine 12 and aspartate 32. Substrate is bound by residues arginine 82 and arginine 88. Residues asparagine 95 and valine 118–asparagine 120 each bind NAD(+). The substrate site is built by asparagine 120 and arginine 151. Histidine 175 serves as the catalytic Proton acceptor.

The protein belongs to the LDH/MDH superfamily. MDH type 3 family. As to quaternary structure, homotetramer.

It catalyses the reaction (S)-malate + NAD(+) = oxaloacetate + NADH + H(+). With respect to regulation, strongly inhibited by iodoacetic acid and CuCl(2). Completely inhibited by N-ethylmaleimide and HgCl(2). Catalyzes the reversible oxidation of malate to oxaloacetate. Can use both NAD and NADP for malate oxidation, but NADPH cannot be used for oxaloacetate reduction. The protein is Malate dehydrogenase of Flavobacterium frigidimaris.